Consider the following 170-residue polypeptide: Protein-export protein SecB (170 aa).

This sequence belongs to the SecB family. Homotetramer, a dimer of dimers. One homotetramer interacts with 1 SecA dimer.

It localises to the cytoplasm. In terms of biological role, one of the proteins required for the normal export of preproteins out of the cell cytoplasm. It is a molecular chaperone that binds to a subset of precursor proteins, maintaining them in a translocation-competent state. It also specifically binds to its receptor SecA. The chain is Protein-export protein SecB from Xanthomonas axonopodis pv. citri (strain 306).